The chain runs to 57 residues: MLKITLKKSLIGRRPNQVKTAHALGLRKIGQSVSKVENDAINGMINTIGHLVVVEKE.

The protein belongs to the universal ribosomal protein uL30 family. As to quaternary structure, part of the 50S ribosomal subunit.

The sequence is that of Large ribosomal subunit protein uL30 from Acholeplasma laidlawii (strain PG-8A).